The following is a 602-amino-acid chain: MTDISVSKIRNFCIIAHIDHGKSTLADRLLQDTGTVQQRDMQEQFLDSMDLERERGITIKLQAARMKYKADDSQEYVLNLIDTPGHVDFSYEVSRSLQACEGALLVVDASQGVEAQTLANVYLALENNLEIIPVLNKVDLPGADAEKIKQEIEEIIGLDTSNAINCSAKTGVGIKDILEAIVRRVPPPQDEIKLPTKALIFDSYYDPYRGVIVYFRVISGSLNKREKILLMASKKNYELDEIGIMAPDQQQVDELHAGEVGYLAASIKSVADARVGDTITLLNSPANDPLPGYKTANPMVFCGLFPTDADQFPDLRVSLEKLQLSDAALKYEPETSSAMGFGFRCGFLGLLHMEIVQERLEREYDLDLIVTAPSVIYKVNLNHQEHIFIDNPSTIPDPQLRESIEEPYVKMEIYAPNEFNGTLMGLCQERRGVFIDMKYITTDRVTLIYEIPLAEVVTDFFDQMKSRTQGYASMEYHLMGYRKNDLVRLDVLINSERADPLTSIVHKDKAYGIGRSLVEKLKELIPKQQFKIPIQASIGSRIIASESISALRKDVLSKCYGGDISRKKKLLKKQAKGKKRMKAMGKVEVPQEAFMAVLKLNQ.

The tr-type G domain maps to S7 to Q189. GTP-binding positions include D19–T24 and N136–D139.

The protein belongs to the TRAFAC class translation factor GTPase superfamily. Classic translation factor GTPase family. LepA subfamily.

It localises to the cell inner membrane. The catalysed reaction is GTP + H2O = GDP + phosphate + H(+). In terms of biological role, required for accurate and efficient protein synthesis under certain stress conditions. May act as a fidelity factor of the translation reaction, by catalyzing a one-codon backward translocation of tRNAs on improperly translocated ribosomes. Back-translocation proceeds from a post-translocation (POST) complex to a pre-translocation (PRE) complex, thus giving elongation factor G a second chance to translocate the tRNAs correctly. Binds to ribosomes in a GTP-dependent manner. This is Elongation factor 4 from Prochlorococcus marinus (strain MIT 9301).